An 85-amino-acid polypeptide reads, in one-letter code: RNA-binding protein Hfq (85 aa).

A Sm domain is found at 9–68; the sequence is DPFLNALRRERIPVSIYLVNGIKLQGQIESFDQFVVLLKNTVSQMVYKHAISTVVPARIP.

This sequence belongs to the Hfq family. Homohexamer.

Its function is as follows. RNA chaperone that binds small regulatory RNA (sRNAs) and mRNAs to facilitate mRNA translational regulation in response to envelope stress, environmental stress and changes in metabolite concentrations. Also binds with high specificity to tRNAs. This is RNA-binding protein Hfq from Idiomarina loihiensis (strain ATCC BAA-735 / DSM 15497 / L2-TR).